Consider the following 207-residue polypeptide: dTTP/UTP pyrophosphatase (207 aa).

Aspartate 79 (proton acceptor) is an active-site residue.

Belongs to the Maf family. YhdE subfamily. A divalent metal cation is required as a cofactor.

The protein localises to the cytoplasm. The enzyme catalyses dTTP + H2O = dTMP + diphosphate + H(+). It carries out the reaction UTP + H2O = UMP + diphosphate + H(+). Nucleoside triphosphate pyrophosphatase that hydrolyzes dTTP and UTP. May have a dual role in cell division arrest and in preventing the incorporation of modified nucleotides into cellular nucleic acids. In Nitrobacter winogradskyi (strain ATCC 25391 / DSM 10237 / CIP 104748 / NCIMB 11846 / Nb-255), this protein is dTTP/UTP pyrophosphatase.